We begin with the raw amino-acid sequence, 269 residues long: Mitochondrial S-adenosylmethionine carrier protein (269 aa).

3 Solcar repeats span residues 4–77 (REFC…AKQL), 85–167 (LSPI…LKDL), and 176–264 (VDSW…VRTL). The next 6 helical transmembrane spans lie at 5 to 25 (EFCASLLAGGTAGMCVDLILF), 49 to 69 (IYAGVPSTAVGSFPNAAAFFV), 84 to 104 (YLSPIIHMAAASLGEVVACLI), 141 to 161 (RGYKSTVLREIPFSLVQFPLW), 181 to 201 (SAVCGAFAGGFAAALTTPLDV), and 237 to 257 (FAGVIPRMTAISLGGFIFLGA).

Belongs to the mitochondrial carrier (TC 2.A.29) family.

It is found in the mitochondrion inner membrane. It catalyses the reaction S-adenosyl-L-homocysteine(out) + S-adenosyl-L-methionine(in) = S-adenosyl-L-homocysteine(in) + S-adenosyl-L-methionine(out). Its function is as follows. Mitochondrial S-adenosyl-L-methionine/S-adenosyl-L-homocysteine antiporter. Mediates the exchange of cytosolic S-adenosyl-L-methionine, the predominant methyl-group donor for macromolecule methylation processes, for mitochondrial S-adenosylhomocysteine(SAH), a by-product of methylation reactions. The polypeptide is Mitochondrial S-adenosylmethionine carrier protein (slc25a26) (Xenopus tropicalis (Western clawed frog)).